The primary structure comprises 269 residues: Transmembrane protein 41B (269 aa).

The next 6 helical transmembrane spans lie at 30 to 50 (TSLL…FLVY), 87 to 107 (FYVQ…TFAI), 125 to 147 (LALF…LSYL), 175 to 195 (LINY…FINI), 203 to 223 (PLKV…FVAI), and 240 to 260 (SWNS…PALF). A VTT domain; required for its function in autophagy region spans residues 118–229 (GFLYPFPLAL…FVAIKAGTTL (112 aa)).

This sequence belongs to the TMEM41 family.

The protein resides in the endoplasmic reticulum membrane. Its subcellular location is the endomembrane system. It carries out the reaction a 1,2-diacyl-sn-glycero-3-phospho-L-serine(in) = a 1,2-diacyl-sn-glycero-3-phospho-L-serine(out). It catalyses the reaction cholesterol(in) = cholesterol(out). The enzyme catalyses a 1,2-diacyl-sn-glycero-3-phosphocholine(in) = a 1,2-diacyl-sn-glycero-3-phosphocholine(out). The catalysed reaction is a 1,2-diacyl-sn-glycero-3-phosphoethanolamine(in) = a 1,2-diacyl-sn-glycero-3-phosphoethanolamine(out). Functionally, phospholipid scramblase involved in lipid homeostasis and membrane dynamics processes. Has phospholipid scramblase activity toward cholesterol and phosphatidylserine, as well as phosphatidylethanolamine and phosphatidylcholine. Required for autophagosome formation: participates in early stages of autophagosome biogenesis at the endoplasmic reticulum (ER) membrane by reequilibrating the leaflets of the ER as lipids are extracted by ATG2 (ATG2A or ATG2B) to mediate autophagosome assembly. In addition to autophagy, involved in other processes in which phospholipid scramblase activity is required. Required for normal motor neuron development. This chain is Transmembrane protein 41B, found in Gallus gallus (Chicken).